Reading from the N-terminus, the 508-residue chain is Mu-like prophage FluMu protein gp28 (508 aa).

The protein to phage Mu protein gp28.

The sequence is that of Mu-like prophage FluMu protein gp28 from Haemophilus influenzae (strain ATCC 51907 / DSM 11121 / KW20 / Rd).